Consider the following 737-residue polypeptide: MSRSTVLGWCTQSCRLLQKHDHSFSFPTFNGSPPLKKRRFCDSAAPAAPRPSIHRPSEYIPHSKSGGEAPQDLGHKAREKEAEKEFYLSLLCSASTKREAKSYLSRFKAQKTTANDGCQHITPRRGDLISDLELMKDKPGVNLGSMFSETRTVAETPAPKQEWSSAQSTELFREKIHVALVKLRKPQLLDDQTLHGVAKTLVQLSRLGMSCCIVIDVGTDKDETHRRIIAREQADRLSAVIDANHGPDSRQLDSIITVPSATDMKLSVLSRGPLLSPLQQGHVVVVVPVGYANDTQRAVLLPANEVVFALSKELAGLELRSGPDEDATTTANKVNDMQKQVSLDRIIILDPAGGIPSLQRRPHVFINLEQEFEDIARELSLGSQTGFLSINDSGTASHKMPVSSLGKSNPISIFVEEELVSLPKTLGESQEMPRNGKRFAEHLENLNLLQRTLSYLPPSSSGIIVTPHEVALSAKGPLNTSAVSAVRTRRQRNPLIHNLLTDKPFQSASLPLGRLGVKSDCMSAGQSPATHSTFVKRGMPLTMLPDPRVEVWAAKKRGEPALTLDDPRIDLPRLIHLIEDSFGRKLDARHYVDRINPRLAGLIIAGEYEGGAVLTWETPPGLSDDGSEEFRARMVPYLDKFAVLKRSQGAGGVADIVFNAMVRTCFPQGVCWRSRANNPVNKWYFERSRGTWKLPGTNWTMFWTTAGVPENQSRFWDYEGVCRAIEPSWADKTQQAD.

The transit peptide at 1–47 (MSRSTVLGWCTQSCRLLQKHDHSFSFPTFNGSPPLKKRRFCDSAAPA) directs the protein to the mitochondrion. The disordered stretch occupies residues 43 to 78 (SAAPAAPRPSIHRPSEYIPHSKSGGEAPQDLGHKAR). In terms of domain architecture, N-acetyltransferase spans 558-727 (GEPALTLDDP…YEGVCRAIEP (170 aa)).

The protein belongs to the acetyltransferase family.

It localises to the mitochondrion. The catalysed reaction is L-glutamate + acetyl-CoA = N-acetyl-L-glutamate + CoA + H(+). The protein operates within amino-acid biosynthesis; L-arginine biosynthesis; N(2)-acetyl-L-ornithine from L-glutamate: step 1/4. N-acetylglutamate synthase involved in arginine biosynthesis. This is Amino-acid acetyltransferase, mitochondrial (ARG2) from Coccidioides immitis (strain RS) (Valley fever fungus).